A 242-amino-acid chain; its full sequence is Segregation and condensation protein A (242 aa).

This sequence belongs to the ScpA family. In terms of assembly, component of a cohesin-like complex composed of ScpA, ScpB and the Smc homodimer, in which ScpA and ScpB bind to the head domain of Smc. The presence of the three proteins is required for the association of the complex with DNA.

It is found in the cytoplasm. Its function is as follows. Participates in chromosomal partition during cell division. May act via the formation of a condensin-like complex containing Smc and ScpB that pull DNA away from mid-cell into both cell halves. This is Segregation and condensation protein A from Lactococcus lactis subsp. cremoris (strain MG1363).